A 1222-amino-acid chain; its full sequence is A disintegrin and metalloproteinase with thrombospondin motifs 16 (1222 aa).

The signal sequence occupies residues 1–20 (MESRGCAALWVLLLAQVSEQ). Residues 21–277 (QTPACALGLA…EYKPSSRHKR (257 aa)) constitute a propeptide that is removed on maturation. 2 N-linked (GlcNAc...) asparagine glycosylation sites follow: Asn-154 and Asn-190. A Cysteine switch motif is present at residues 245–253 (HFCGRRKKY). Cys-247 provides a ligand contact to Zn(2+). One can recognise a Peptidase M12B domain in the interval 288 to 493 (LNVETLVVVD…AQAICLADQP (206 aa)). Asn-308 is a glycosylation site (N-linked (GlcNAc...) asparagine). Disulfide bonds link Cys-364–Cys-415, Cys-390–Cys-397, Cys-409–Cys-488, Cys-448–Cys-472, Cys-516–Cys-541, Cys-527–Cys-548, Cys-536–Cys-567, Cys-561–Cys-572, Cys-596–Cys-633, Cys-600–Cys-638, and Cys-611–Cys-623. Zn(2+) is bound at residue His-431. Glu-432 is a catalytic residue. The Zn(2+) site is built by His-435 and His-441. The region spanning 494–583 (KPVKEYKYPE…KYGDEGPKPT (90 aa)) is the Disintegrin domain. Positions 584–639 (HGHWSDWSPWSPCSRTCGGGISHRDRLCTNPRPSHGGKFCQGSTRTLKLCNSQRCP) constitute a TSP type-1 1 domain. N-linked (GlcNAc...) asparagine glycosylation is found at Asn-739, Asn-778, Asn-825, Asn-833, Asn-903, and Asn-933. The tract at residues 745–871 (THRGLYSKHH…KTPAAQPSYS (127 aa)) is spacer. TSP type-1 domains are found at residues 872–920 (WAIV…LVPC), 925–985 (CPSS…QSCP), 986–1046 (PAWS…KRCH), 1049–1113 (KKLQ…IPCP), and 1125–1179 (RGSW…HFCP). In terms of domain architecture, PLAC spans 1184–1221 (RGTFCKDLFHWCYLVPQHGMCGHRFYSKQCCNTCSKSN).

Requires Zn(2+) as cofactor. The precursor is cleaved by a furin endopeptidase. Post-translationally, glycosylated. Can be O-fucosylated by POFUT2 on a serine or a threonine residue found within the consensus sequence C1-X(2)-(S/T)-C2-G of the TSP type-1 repeat domains where C1 and C2 are the first and second cysteine residue of the repeat, respectively. Fucosylated repeats can then be further glycosylated by the addition of a beta-1,3-glucose residue by the glucosyltransferase, B3GALTL. Fucosylation mediates the efficient secretion of ADAMTS family members. Can also be C-glycosylated with one or two mannose molecules on tryptophan residues within the consensus sequence W-X-X-W of the TPRs, and N-glycosylated. These other glycosylations can also facilitate secretion.

It localises to the secreted. It is found in the extracellular space. The protein localises to the extracellular matrix. The sequence is that of A disintegrin and metalloproteinase with thrombospondin motifs 16 (Adamts16) from Mus musculus (Mouse).